The chain runs to 159 residues: 2-C-methyl-D-erythritol 2,4-cyclodiphosphate synthase (159 aa).

The a divalent metal cation site is built by Asp-8 and His-10. 4-CDP-2-C-methyl-D-erythritol 2-phosphate-binding positions include 8–10 (DVH) and 34–35 (HS). His-42 is a binding site for a divalent metal cation. 4-CDP-2-C-methyl-D-erythritol 2-phosphate-binding positions include 56–58 (DIG), 61–65 (FPDTD), 132–135 (TTTE), Phe-139, and Arg-142.

It belongs to the IspF family. As to quaternary structure, homotrimer. The cofactor is a divalent metal cation.

The enzyme catalyses 4-CDP-2-C-methyl-D-erythritol 2-phosphate = 2-C-methyl-D-erythritol 2,4-cyclic diphosphate + CMP. The protein operates within isoprenoid biosynthesis; isopentenyl diphosphate biosynthesis via DXP pathway; isopentenyl diphosphate from 1-deoxy-D-xylulose 5-phosphate: step 4/6. Involved in the biosynthesis of isopentenyl diphosphate (IPP) and dimethylallyl diphosphate (DMAPP), two major building blocks of isoprenoid compounds. Catalyzes the conversion of 4-diphosphocytidyl-2-C-methyl-D-erythritol 2-phosphate (CDP-ME2P) to 2-C-methyl-D-erythritol 2,4-cyclodiphosphate (ME-CPP) with a corresponding release of cytidine 5-monophosphate (CMP). This chain is 2-C-methyl-D-erythritol 2,4-cyclodiphosphate synthase, found in Syntrophobacter fumaroxidans (strain DSM 10017 / MPOB).